The primary structure comprises 493 residues: ATP synthase subunit beta (493 aa).

An ATP-binding site is contributed by 169-176 (GGAGVGKT).

Belongs to the ATPase alpha/beta chains family. F-type ATPases have 2 components, CF(1) - the catalytic core - and CF(0) - the membrane proton channel. CF(1) has five subunits: alpha(3), beta(3), gamma(1), delta(1), epsilon(1). CF(0) has three main subunits: a(1), b(2) and c(9-12). The alpha and beta chains form an alternating ring which encloses part of the gamma chain. CF(1) is attached to CF(0) by a central stalk formed by the gamma and epsilon chains, while a peripheral stalk is formed by the delta and b chains.

The protein resides in the cell inner membrane. The enzyme catalyses ATP + H2O + 4 H(+)(in) = ADP + phosphate + 5 H(+)(out). Produces ATP from ADP in the presence of a proton gradient across the membrane. The catalytic sites are hosted primarily by the beta subunits. The sequence is that of ATP synthase subunit beta from Gluconacetobacter diazotrophicus (strain ATCC 49037 / DSM 5601 / CCUG 37298 / CIP 103539 / LMG 7603 / PAl5).